A 185-amino-acid chain; its full sequence is MLVVIVGPMFAGKTTELIRRVERYVIAGRRAIVFKPSLDVRYDASKVAAHNGLKFDAFVIPPDKDGVEIIRKMGAEYDVVAVDEIQFFPVDLADALNQLANGRIVIAAGLNLDFRGEPFETTARAMAFADRVISLSAVCKLCGKPATRTQRLINGVPAPRHSPRILIGGNESYEARCRRHYVIPP.

Residues 7–14 (GPMFAGKT) and 83–86 (DEIQ) contribute to the ATP site. The active-site Proton acceptor is Glu-84. Residues Cys-139, Cys-142, Cys-177, and His-180 each contribute to the Zn(2+) site.

The protein belongs to the thymidine kinase family. As to quaternary structure, homotetramer.

The protein resides in the cytoplasm. The catalysed reaction is thymidine + ATP = dTMP + ADP + H(+). The sequence is that of Thymidine kinase from Pyrobaculum aerophilum (strain ATCC 51768 / DSM 7523 / JCM 9630 / CIP 104966 / NBRC 100827 / IM2).